The following is a 71-amino-acid chain: Translation initiation factor IF-1 (71 aa).

In terms of domain architecture, S1-like spans 1 to 71 (MSKDDLIQFT…LTKGRVIHRH (71 aa)).

This sequence belongs to the IF-1 family. In terms of assembly, component of the 30S ribosomal translation pre-initiation complex which assembles on the 30S ribosome in the order IF-2 and IF-3, IF-1 and N-formylmethionyl-tRNA(fMet); mRNA recruitment can occur at any time during PIC assembly.

It is found in the cytoplasm. Its function is as follows. One of the essential components for the initiation of protein synthesis. Stabilizes the binding of IF-2 and IF-3 on the 30S subunit to which N-formylmethionyl-tRNA(fMet) subsequently binds. Helps modulate mRNA selection, yielding the 30S pre-initiation complex (PIC). Upon addition of the 50S ribosomal subunit IF-1, IF-2 and IF-3 are released leaving the mature 70S translation initiation complex. The sequence is that of Translation initiation factor IF-1 from Rickettsia typhi (strain ATCC VR-144 / Wilmington).